The chain runs to 312 residues: Lipoyl synthase (312 aa).

[4Fe-4S] cluster contacts are provided by Cys37, Cys42, Cys48, Cys67, Cys71, Cys74, and Ser281. The Radical SAM core domain maps to 52–270 (RDGPGTATFM…AVAEREFDFL (219 aa)).

Belongs to the radical SAM superfamily. Lipoyl synthase family. The cofactor is [4Fe-4S] cluster.

The protein resides in the cytoplasm. The catalysed reaction is [[Fe-S] cluster scaffold protein carrying a second [4Fe-4S](2+) cluster] + N(6)-octanoyl-L-lysyl-[protein] + 2 oxidized [2Fe-2S]-[ferredoxin] + 2 S-adenosyl-L-methionine + 4 H(+) = [[Fe-S] cluster scaffold protein] + N(6)-[(R)-dihydrolipoyl]-L-lysyl-[protein] + 4 Fe(3+) + 2 hydrogen sulfide + 2 5'-deoxyadenosine + 2 L-methionine + 2 reduced [2Fe-2S]-[ferredoxin]. The protein operates within protein modification; protein lipoylation via endogenous pathway; protein N(6)-(lipoyl)lysine from octanoyl-[acyl-carrier-protein]: step 2/2. Catalyzes the radical-mediated insertion of two sulfur atoms into the C-6 and C-8 positions of the octanoyl moiety bound to the lipoyl domains of lipoate-dependent enzymes, thereby converting the octanoylated domains into lipoylated derivatives. The sequence is that of Lipoyl synthase from Halorubrum lacusprofundi (strain ATCC 49239 / DSM 5036 / JCM 8891 / ACAM 34).